The chain runs to 889 residues: TATA box-binding protein-associated factor RNA polymerase I subunit B (889 aa).

The RRN7-type zinc-finger motif lies at 1–33 (MAPETNEKCKACGGFNFSMIDGFKYCDRCGTLL). Positions 9, 12, 26, and 29 each coordinate Zn(2+). The B-reader stretch occupies residues 35–101 (NFEELEAEEG…DFFSRQALKN (67 aa)). Residues 102–113 (DELAFPHESTPD) form a B-linker region. Residues 114–351 (YLYRLGLRLA…SAKEQETKEA (238 aa)) form an N-terminal cyclin fold region. The segment at 229–253 (NLDLDSEEDEEEEENPNLNKSMENL) is disordered. Positions 230–243 (LDLDSEEDEEEEEN) are enriched in acidic residues. Residues 352–510 (MTKVDYAEPY…LLVFRLTFDI (159 aa)) are C-terminal cyclin fold.

The protein belongs to the RRN7/TAF1B family.

It is found in the nucleus. It localises to the nucleolus. In terms of biological role, component of RNA polymerase I core factor complex that acts as a GTF2B/TFIIB-like factor and plays a key role in multiple steps during transcription initiation such as pre-initiation complex (PIC) assembly and postpolymerase recruitment events in polymerase I (Pol I) transcription. Binds rDNA promoters and plays a role in Pol I recruitment. The polypeptide is TATA box-binding protein-associated factor RNA polymerase I subunit B (Caenorhabditis briggsae).